Here is a 447-residue protein sequence, read N- to C-terminus: Na(+)-translocating NADH-quinone reductase subunit A (447 aa).

It belongs to the NqrA family. In terms of assembly, composed of six subunits; NqrA, NqrB, NqrC, NqrD, NqrE and NqrF.

The catalysed reaction is a ubiquinone + n Na(+)(in) + NADH + H(+) = a ubiquinol + n Na(+)(out) + NAD(+). In terms of biological role, NQR complex catalyzes the reduction of ubiquinone-1 to ubiquinol by two successive reactions, coupled with the transport of Na(+) ions from the cytoplasm to the periplasm. NqrA to NqrE are probably involved in the second step, the conversion of ubisemiquinone to ubiquinol. The protein is Na(+)-translocating NADH-quinone reductase subunit A of Neisseria meningitidis serogroup C / serotype 2a (strain ATCC 700532 / DSM 15464 / FAM18).